The chain runs to 315 residues: MIQPPIGKKVLVEVPSTTANLGPGFDCLGAALSLTNFFTIKRIDGDSERFELIMESTEGNHLRGGPENLFYRAAQRVWKAAEVEPFALEARVKLAVPPARGLGSSATAIVAGLVGANALINDPLSKEKLLELAIDIEGHPDNVVPSLLGGLCFTAKAASQRWRVVKCDWDDSIKAVVAIPSLRLSTSEARRVMPKTVPLGDAVMNLGSLTLLLNGLRTGRQDLITDGMHDRLHEPYRWKLIKGGAQVCEAAINAGAFGCAISGAGPSILALCKEDKGRNISQAMVKAWESEGVASRAPLLNLQTKGSTWYSNQSK.

97-107 provides a ligand contact to ATP; that stretch reads PPARGLGSSAT.

This sequence belongs to the GHMP kinase family. Homoserine kinase subfamily.

It is found in the cytoplasm. The catalysed reaction is L-homoserine + ATP = O-phospho-L-homoserine + ADP + H(+). It functions in the pathway amino-acid biosynthesis; L-threonine biosynthesis; L-threonine from L-aspartate: step 4/5. Catalyzes the ATP-dependent phosphorylation of L-homoserine to L-homoserine phosphate. In Prochlorococcus marinus (strain SARG / CCMP1375 / SS120), this protein is Homoserine kinase.